The following is a 409-amino-acid chain: MLINVVLIILLVGLNGKASGQNQGLCSPDENASCADSSDTQDEFSFNILRKIKKALASYQPCSSDANDANCSCHAAVIKSDLAPYKATGVSRQMIESSARYGTRYKIYEKRLYREENCMFPARCQGIEHFLLPLVATLPDMDLVINTRDYPQINMAWGNGAQGPILSFSKTKDHRDIMYPAWTFWAGGPATKLHPRGIGRWDLMREKLEKRAAAIPWSQKRELGFFRGSRTSDERDSLILLSRRNPELVEAQYTKNQGWKSPKDTLDAPPAGEVSFEDHCKYKYLFNFRGVAASFRLKHLFLCQSLVFHVGDEWQEFFYDQLKPWVHYVPLKNYPSQQEYEELLTFFRKNDALAQEIAQRGRDFIWQHLRMKDIKCYWRRLLKSYVKLLTYEVQPEDQLIHIQPAKDEL.

The N-terminal stretch at 1 to 20 (MLINVVLIILLVGLNGKASG) is a signal peptide. 4 disulfide bridges follow: Cys-62–Cys-73, Cys-71–Cys-376, Cys-118–Cys-124, and Cys-280–Cys-303. Asp-149 serves as the catalytic Proton donor/acceptor. Residues 190–195 (ATKLHP) are interaction with the consensus sequence C-X-S-X-[PA]-C in peptide substrates. Residues 227–231 (RGSRT), Arg-235, 274–276 (VSF), and 292–296 (AASFR) each bind UDP-alpha-D-glucose. The Prevents secretion from ER signature appears at 406 to 409 (KDEL).

It belongs to the glycosyltransferase 90 family.

The protein resides in the endoplasmic reticulum lumen. Its pathway is protein modification; protein glycosylation. In terms of biological role, protein O-glucosyltransferase. Catalyzes the reaction that attaches glucose through an O-glycosidic linkage to a conserved serine residue found in the consensus sequence C-X-S-X-[PA]-C in epidermal growth factor-like repeats. Regulates Notch signaling by glucosylating Notch in the ER, glucosylation is required for the correct folding and cleavage of Notch. This Drosophila pseudoobscura pseudoobscura (Fruit fly) protein is O-glucosyltransferase rumi.